A 158-amino-acid chain; its full sequence is NADPH-dependent 7-cyano-7-deazaguanine reductase (158 aa).

Residue C56 is the Thioimide intermediate of the active site. Residue D63 is the Proton donor of the active site. Substrate contacts are provided by residues 78-80 (LES) and 97-98 (HE).

Belongs to the GTP cyclohydrolase I family. QueF type 1 subfamily.

It localises to the cytoplasm. It catalyses the reaction 7-aminomethyl-7-carbaguanine + 2 NADP(+) = 7-cyano-7-deazaguanine + 2 NADPH + 3 H(+). It participates in tRNA modification; tRNA-queuosine biosynthesis. In terms of biological role, catalyzes the NADPH-dependent reduction of 7-cyano-7-deazaguanine (preQ0) to 7-aminomethyl-7-deazaguanine (preQ1). In Nitrobacter hamburgensis (strain DSM 10229 / NCIMB 13809 / X14), this protein is NADPH-dependent 7-cyano-7-deazaguanine reductase.